The primary structure comprises 208 residues: AN1-type zinc finger protein 6 (208 aa).

The segment at 8-42 adopts an A20-type zinc-finger fold; sequence SQVPMLCSTGCGFYGNPRTNGMCSVCYKEHLQRQN. Zn(2+) is bound by residues C14, C18, C30, and C33. The tract at residues 41–110 is disordered; it reads QNSSNGRISP…ASSQVDSTSV (70 aa). S49 carries the phosphoserine modification. The segment covering 54–68 has biased composition (polar residues); it reads SVTSLSESLPVQCTD. Residues 83–94 are compositionally biased toward low complexity; it reads SSVQPSPVSNQS. Over residues 95 to 110 the composition is skewed to polar residues; that stretch reads LLSESVASSQVDSTSV. Residues 143-189 form an AN1-type zinc finger; it reads KQKKNRCFMCRKKVGLTGFECRCGNVYCGVHRYSDVHNCSYNYKADA. Positions 149, 152, 163, 165, 170, 173, 179, and 181 each coordinate Zn(2+). K204 carries the N6-acetyllysine modification.

As to quaternary structure, interacts with PKN1.

The chain is AN1-type zinc finger protein 6 (ZFAND6) from Bos taurus (Bovine).